Reading from the N-terminus, the 184-residue chain is ATP synthase subunit b (184 aa).

Residues 16-36 (LIPPIPELVIGLIAFVIVFGF) traverse the membrane as a helical segment.

Belongs to the ATPase B chain family. F-type ATPases have 2 components, F(1) - the catalytic core - and F(0) - the membrane proton channel. F(1) has five subunits: alpha(3), beta(3), gamma(1), delta(1), epsilon(1). F(0) has three main subunits: a(1), b(2) and c(10-14). The alpha and beta chains form an alternating ring which encloses part of the gamma chain. F(1) is attached to F(0) by a central stalk formed by the gamma and epsilon chains, while a peripheral stalk is formed by the delta and b chains.

The protein localises to the cell membrane. Its function is as follows. F(1)F(0) ATP synthase produces ATP from ADP in the presence of a proton or sodium gradient. F-type ATPases consist of two structural domains, F(1) containing the extramembraneous catalytic core and F(0) containing the membrane proton channel, linked together by a central stalk and a peripheral stalk. During catalysis, ATP synthesis in the catalytic domain of F(1) is coupled via a rotary mechanism of the central stalk subunits to proton translocation. Component of the F(0) channel, it forms part of the peripheral stalk, linking F(1) to F(0). The polypeptide is ATP synthase subunit b (Streptomyces coelicolor (strain ATCC BAA-471 / A3(2) / M145)).